The sequence spans 201 residues: Probable molybdenum cofactor guanylyltransferase (201 aa).

Residues 16 to 18 (LAG), Lys-28, Asp-75, and Asp-107 each bind GTP. Asp-107 lines the Mg(2+) pocket.

Belongs to the MobA family. It depends on Mg(2+) as a cofactor.

The protein localises to the cytoplasm. It carries out the reaction Mo-molybdopterin + GTP + H(+) = Mo-molybdopterin guanine dinucleotide + diphosphate. In terms of biological role, transfers a GMP moiety from GTP to Mo-molybdopterin (Mo-MPT) cofactor (Moco or molybdenum cofactor) to form Mo-molybdopterin guanine dinucleotide (Mo-MGD) cofactor. The polypeptide is Probable molybdenum cofactor guanylyltransferase (Mycobacterium bovis (strain ATCC BAA-935 / AF2122/97)).